The primary structure comprises 126 residues: Protein ApaG (126 aa).

The 125-residue stretch at 2-126 (NQRLSPIKVE…FSLAVPGLLH (125 aa)) folds into the ApaG domain.

This chain is Protein ApaG, found in Shewanella piezotolerans (strain WP3 / JCM 13877).